A 216-amino-acid chain; its full sequence is UPF0193 protein EVG1 homolog (216 aa).

This sequence belongs to the UPF0193 (EVG1) family.

In Mus musculus (Mouse), this protein is UPF0193 protein EVG1 homolog.